The chain runs to 102 residues: Small ribosomal subunit protein uS10 (102 aa).

This sequence belongs to the universal ribosomal protein uS10 family. In terms of assembly, part of the 30S ribosomal subunit.

Functionally, involved in the binding of tRNA to the ribosomes. The sequence is that of Small ribosomal subunit protein uS10 from Methanosphaera stadtmanae (strain ATCC 43021 / DSM 3091 / JCM 11832 / MCB-3).